The primary structure comprises 45 residues: Large ribosomal subunit protein bL34 (45 aa).

This sequence belongs to the bacterial ribosomal protein bL34 family.

In Arthrobacter sp. (strain FB24), this protein is Large ribosomal subunit protein bL34.